A 301-amino-acid polypeptide reads, in one-letter code: Phospholipase A1 VesT1.02 (301 aa).

Cystine bridges form between cysteine 87–cysteine 294, cysteine 176–cysteine 245, cysteine 181–cysteine 262, cysteine 219–cysteine 228, cysteine 240–cysteine 246, and cysteine 267–cysteine 269. Serine 137 acts as the Nucleophile in catalysis. Aspartate 165 (charge relay system) is an active-site residue. Histidine 230 functions as the Charge relay system in the catalytic mechanism.

Belongs to the AB hydrolase superfamily. Lipase family. Post-translationally, is not glycosylated. In terms of tissue distribution, expressed by the venom gland.

The protein localises to the secreted. The enzyme catalyses a 1,2-diacyl-sn-glycero-3-phosphocholine + H2O = a 2-acyl-sn-glycero-3-phosphocholine + a fatty acid + H(+). Its function is as follows. Catalyzes the hydrolysis of phosphatidylcholine with phospholipase A1 activity. Shows hemolytic activity. This chain is Phospholipase A1 VesT1.02, found in Vespa tropica (Greater banded hornet).